The primary structure comprises 151 residues: Large-conductance mechanosensitive channel (151 aa).

2 consecutive transmembrane segments (helical) span residues 12–32 and 71–91; these read GNIV…ALVT and VLLS…FLVV. The tract at residues 122 to 151 is disordered; the sequence is AQTNGDSPGRHGGRGTPSPTDGPRASTESQ.

The protein belongs to the MscL family. Homopentamer.

It is found in the cell membrane. Functionally, channel that opens in response to stretch forces in the membrane lipid bilayer. May participate in the regulation of osmotic pressure changes within the cell. This is Large-conductance mechanosensitive channel from Mycobacterium tuberculosis (strain CDC 1551 / Oshkosh).